A 379-amino-acid chain; its full sequence is MSGFLPFSRPAMGVEELAAVKEVLESGWITTGPKNQALEQAFCQLTGNQHAIAVSSATAGMHITLMALEIGKGDEVITPSLTWVSTLNMISLLGATPVMVDVDRDTLMVTPEAIEAAITPRTKAIIPVHYAGAPADIDAIRAIGERYGIAVIEDAAHAVGMYYKGRHIGAKGTAIFSFHAIKNITCAEGGLIVTDNENLARQLRMLKFHGLGVDAYDRHTWGRAPQAEVLTPGYKYNLTDINAAIALTQLVKLEHLNTRRREIAQQYQQALAALPFQPLSLPAWPHVHAWHLFIIRVDEQRCGISRDALMEALKERGIGAGLHFRAAHTQKYYRERFPTLSLPNTEWNSERICSLPLFPDMTTADADRVITALKQLAGQ.

An N6-(pyridoxal phosphate)lysine modification is found at lysine 182.

This sequence belongs to the DegT/DnrJ/EryC1 family. ArnB subfamily. In terms of assembly, homodimer. It depends on pyridoxal 5'-phosphate as a cofactor.

The catalysed reaction is UDP-4-amino-4-deoxy-beta-L-arabinose + 2-oxoglutarate = UDP-beta-L-threo-pentopyranos-4-ulose + L-glutamate. The protein operates within nucleotide-sugar biosynthesis; UDP-4-deoxy-4-formamido-beta-L-arabinose biosynthesis; UDP-4-deoxy-4-formamido-beta-L-arabinose from UDP-alpha-D-glucuronate: step 2/3. Its pathway is bacterial outer membrane biogenesis; lipopolysaccharide biosynthesis. Its function is as follows. Catalyzes the conversion of UDP-4-keto-arabinose (UDP-Ara4O) to UDP-4-amino-4-deoxy-L-arabinose (UDP-L-Ara4N). The modified arabinose is attached to lipid A and is required for resistance to polymyxin and cationic antimicrobial peptides. The sequence is that of UDP-4-amino-4-deoxy-L-arabinose--oxoglutarate aminotransferase from Escherichia coli O81 (strain ED1a).